A 329-amino-acid chain; its full sequence is 4-hydroxythreonine-4-phosphate dehydrogenase (329 aa).

Substrate is bound by residues His136 and Thr137. The a divalent metal cation site is built by His166, His211, and His266. 3 residues coordinate substrate: Lys274, Asn283, and Arg292.

Belongs to the PdxA family. Homodimer. The cofactor is Zn(2+). It depends on Mg(2+) as a cofactor. Requires Co(2+) as cofactor.

It is found in the cytoplasm. The enzyme catalyses 4-(phosphooxy)-L-threonine + NAD(+) = 3-amino-2-oxopropyl phosphate + CO2 + NADH. It functions in the pathway cofactor biosynthesis; pyridoxine 5'-phosphate biosynthesis; pyridoxine 5'-phosphate from D-erythrose 4-phosphate: step 4/5. In terms of biological role, catalyzes the NAD(P)-dependent oxidation of 4-(phosphooxy)-L-threonine (HTP) into 2-amino-3-oxo-4-(phosphooxy)butyric acid which spontaneously decarboxylates to form 3-amino-2-oxopropyl phosphate (AHAP). The sequence is that of 4-hydroxythreonine-4-phosphate dehydrogenase from Salmonella arizonae (strain ATCC BAA-731 / CDC346-86 / RSK2980).